Consider the following 416-residue polypeptide: Putative serine protease HhoB (416 aa).

Residues 1–25 form the signal peptide; the sequence is MAIHLKASHLGVAVLLLLFGGAIGA. The span at 35 to 53 shows a compositional bias: polar residues; that stretch reads GQNHSSPDSPVNTSPQSLT. Positions 35–57 are disordered; sequence GQNHSSPDSPVNTSPQSLTPAPV. Residues 320–398 enclose the PDZ domain; the sequence is EMTKQLRTSG…PLAIAVKRGQ (79 aa).

Belongs to the peptidase S1C family.

Its function is as follows. A putative protease, its function overlaps that of the related putative proteases HtrA and HhoA. In Synechocystis sp. (strain ATCC 27184 / PCC 6803 / Kazusa), this protein is Putative serine protease HhoB (hhoB).